An 853-amino-acid chain; its full sequence is MRVRGIERNCQNLWKWGIMLLGILMTCSNADNLWVTVYYGVPVWKEATTTLFCASDAKSYKTEAHNIWATHACVPTDPNPQEIELENVTENFNMWRNNMVEQMHEDIISLWDQSLKPCVKLTPLCVTLNCIDEVMENVTMKNNNVTEEIRMKNCSFNITTVVRDKTKQVHALFYRLDIVPIDNDNSTNSTNYRLINCNTSAITQACPKVSFEPIPIHYCAPAGFAILKCRDKRFNGTGPCTNVSTVQCTHGIRPVVSTQLLLNGSLAEEEIIIRSENLTNNAKIIIVQLNESVAINCTRPYRNIRQRTSIGLGQALYTTKTRSIIGQAYCNISKNEWNKTLQQVAIKLGNLLNKTTIIFKPSSGGDPEITTHSFNCGGEFFYCNTSGLFNSTWDISKSEWANSTESDDKPITLQCRIKQIINMWQGVGKAMYAPPIEGQINCSSNITGLLLTRDGGTNNSSNETFRPGGGDMRDNWRSELYKYKVVKIEPLGVAPTRAKRRVVEREKRAIGLGAMFLGFLGAAGSTMGARSLTLTVQARQLLSGIVQQQNNLLRAIEAQQHLLQLTVWGIKQLQARILAVERYLKDQQLLGIWGCSGKLICTTTVPWNSSWSNRSLNDIWQNMTWMEWEREIDNYTGLIYRLIEESQTQQEKNEQELLELDKWASLWNWFNITQWLWYIKIFIMIVGGLIGLRIVFAVLSLVNRVRQGYSPLSFQTLLPAPRGPDRPEGIEEEGGERGRDRSIRLVNGFSALIWDDLRNLCLFSYHRLRDLILIAARIVELLGRRGWEALKYLWNLLQYWSRELKNSASSLLDTIAIAVAEGTDRVIEIVRRACRAVLHIPTRIRQGLERLLL.

Positions 1–31 are cleaved as a signal peptide; that stretch reads MRVRGIERNCQNLWKWGIMLLGILMTCSNAD. Over 32–681 the chain is Extracellular; the sequence is NLWVTVYYGV…ITQWLWYIKI (650 aa). Residues Cys53 and Cys73 are joined by a disulfide bond. N-linked (GlcNAc...) asparagine; by host glycans are attached at residues Asn87, Asn137, Asn144, Asn153, Asn157, Asn185, Asn188, Asn198, Asn235, Asn242, Asn263, Asn277, Asn290, and Asn296. Cystine bridges form between Cys118–Cys206, Cys125–Cys197, Cys130–Cys154, Cys219–Cys248, and Cys229–Cys240. Positions 130 to 153 are V1; that stretch reads CIDEVMENVTMKNNNVTEEIRMKN. The V2 stretch occupies residues 154-197; it reads CSFNITTVVRDKTKQVHALFYRLDIVPIDNDNSTNSTNYRLINC. The tract at residues 297–329 is V3; sequence CTRPYRNIRQRTSIGLGQALYTTKTRSIIGQAY. Cys297 and Cys330 are oxidised to a cystine. 3 N-linked (GlcNAc...) asparagine; by host glycosylation sites follow: Asn331, Asn338, and Asn353. Positions 362 to 372 are CD4-binding loop; it reads SSGGDPEITTH. 2 cysteine pairs are disulfide-bonded: Cys376/Cys442 and Cys383/Cys415. The V4 stretch occupies residues 383-415; sequence CNTSGLFNSTWDISKSEWANSTESDDKPITLQC. Asn384, Asn390, Asn402, Asn441, Asn445, Asn458, Asn459, and Asn462 each carry an N-linked (GlcNAc...) asparagine; by host glycan. V5 stretches follow at residues 457–468 and 460–468; these read TNNSSNETFRPG and SSNETFRPG. Positions 509–529 are fusion peptide; that stretch reads AIGLGAMFLGFLGAAGSTMGA. Positions 571–589 are immunosuppression; sequence KQLQARILAVERYLKDQQL. Cys595 and Cys601 are oxidised to a cystine. Asn608, Asn613, Asn622, Asn634, and Asn671 each carry an N-linked (GlcNAc...) asparagine; by host glycan. Residues 630–664 are a coiled coil; the sequence is REIDNYTGLIYRLIEESQTQQEKNEQELLELDKWA. Positions 659-680 are MPER; binding to GalCer; sequence ELDKWASLWNWFNITQWLWYIK. The helical transmembrane segment at 682-702 threads the bilayer; the sequence is FIMIVGGLIGLRIVFAVLSLV. Residues 703–853 are Cytoplasmic-facing; the sequence is NRVRQGYSPL…IRQGLERLLL (151 aa). The YXXL motif; contains endocytosis signal signature appears at 709–712; sequence YSPL. S-palmitoyl cysteine; by host attachment occurs at residues Cys761 and Cys834. Positions 852 to 853 match the Di-leucine internalization motif motif; it reads LL.

It belongs to the HIV-1 env protein family. In terms of assembly, the mature envelope protein (Env) consists of a homotrimer of non-covalently associated gp120-gp41 heterodimers. The resulting complex protrudes from the virus surface as a spike. There seems to be as few as 10 spikes on the average virion. Interacts with host CD4, CCR5 and CXCR4. Gp120 also interacts with the C-type lectins CD209/DC-SIGN and CLEC4M/DC-SIGNR (collectively referred to as DC-SIGN(R)). Gp120 and gp41 interact with GalCer. Gp120 interacts with host ITGA4/ITGB7 complex; on CD4+ T-cells, this interaction results in rapid activation of integrin ITGAL/LFA-1, which facilitates efficient cell-to-cell spreading of HIV-1. Gp120 interacts with cell-associated heparan sulfate; this interaction increases virus infectivity on permissive cells and may be involved in infection of CD4- cells. As to quaternary structure, the mature envelope protein (Env) consists of a homotrimer of non-covalently associated gp120-gp41 heterodimers. The resulting complex protrudes from the virus surface as a spike. There seems to be as few as 10 spikes on the average virion. Highly glycosylated by host. The high number of glycan on the protein is reffered to as 'glycan shield' because it contributes to hide protein sequence from adaptive immune system. In terms of processing, palmitoylation of the transmembrane protein and of Env polyprotein (prior to its proteolytic cleavage) is essential for their association with host cell membrane lipid rafts. Palmitoylation is therefore required for envelope trafficking to classical lipid rafts, but not for viral replication. Post-translationally, specific enzymatic cleavages in vivo yield mature proteins. Envelope glycoproteins are synthesized as an inactive precursor that is heavily N-glycosylated and processed likely by host cell furin in the Golgi to yield the mature SU and TM proteins. The cleavage site between SU and TM requires the minimal sequence [KR]-X-[KR]-R. About 2 of the 9 disulfide bonds of gp41 are reduced by P4HB/PDI, following binding to CD4 receptor.

The protein resides in the virion membrane. Its subcellular location is the host cell membrane. It localises to the host endosome membrane. Functionally, oligomerizes in the host endoplasmic reticulum into predominantly trimers. In a second time, gp160 transits in the host Golgi, where glycosylation is completed. The precursor is then proteolytically cleaved in the trans-Golgi and thereby activated by cellular furin or furin-like proteases to produce gp120 and gp41. Its function is as follows. Attaches the virus to the host lymphoid cell by binding to the primary receptor CD4. This interaction induces a structural rearrangement creating a high affinity binding site for a chemokine coreceptor like CXCR4 and/or CCR5. Acts as a ligand for CD209/DC-SIGN and CLEC4M/DC-SIGNR, which are respectively found on dendritic cells (DCs), and on endothelial cells of liver sinusoids and lymph node sinuses. These interactions allow capture of viral particles at mucosal surfaces by these cells and subsequent transmission to permissive cells. HIV subverts the migration properties of dendritic cells to gain access to CD4+ T-cells in lymph nodes. Virus transmission to permissive T-cells occurs either in trans (without DCs infection, through viral capture and transmission), or in cis (following DCs productive infection, through the usual CD4-gp120 interaction), thereby inducing a robust infection. In trans infection, bound virions remain infectious over days and it is proposed that they are not degraded, but protected in non-lysosomal acidic organelles within the DCs close to the cell membrane thus contributing to the viral infectious potential during DCs' migration from the periphery to the lymphoid tissues. On arrival at lymphoid tissues, intact virions recycle back to DCs' cell surface allowing virus transmission to CD4+ T-cells. Acts as a class I viral fusion protein. Under the current model, the protein has at least 3 conformational states: pre-fusion native state, pre-hairpin intermediate state, and post-fusion hairpin state. During fusion of viral and target intracellular membranes, the coiled coil regions (heptad repeats) assume a trimer-of-hairpins structure, positioning the fusion peptide in close proximity to the C-terminal region of the ectodomain. The formation of this structure appears to drive apposition and subsequent fusion of viral and target cell membranes. Complete fusion occurs in host cell endosomes and is dynamin-dependent, however some lipid transfer might occur at the plasma membrane. The virus undergoes clathrin-dependent internalization long before endosomal fusion, thus minimizing the surface exposure of conserved viral epitopes during fusion and reducing the efficacy of inhibitors targeting these epitopes. Membranes fusion leads to delivery of the nucleocapsid into the cytoplasm. The sequence is that of Envelope glycoprotein gp160 from Homo sapiens (Human).